The sequence spans 359 residues: Transcription factor bHLH130 (359 aa).

S60 carries the post-translational modification Phosphoserine. A disordered region spans residues 161-186; that stretch reads EEDEESPSNSNGLRRHCSLSSRPPSS. Residues 167-184 show a composition bias toward polar residues; sequence PSNSNGLRRHCSLSSRPP. The region spanning 285–335 is the bHLH domain; that stretch reads CATHPRSIAERVRRTRISERMRKLQELVPNMDKQTNTSDMLDLAVDYIKDL.

Homodimer.

The protein resides in the nucleus. The polypeptide is Transcription factor bHLH130 (BHLH130) (Arabidopsis thaliana (Mouse-ear cress)).